The following is a 316-amino-acid chain: MKLSKAKQDLDHHVWKLIKLHSLQDKKILVALSGGTDSVALLRSLTKVHKKNLLGACYFHHGEDSNQEYRKEAQEFCEKLCKKLEIEFYPLRASQLAKSEAEYRELRYEALDRLKKEQGFELVATGHHRDDLLETRLIRLIRGTGAQGFAAMHVLRDGLFRPLLEISKKELKKYLREERLRSFEDPTNKALDPLRNWLREEWLKSLERRARGSTAALARSLETIAQEIENRPWGDLLGQNEAYKTQGLRRSFYLTLSPFEQKRLLAQYLFSLGKRDFSQSHLEEIQKRLDKSQKVITFKVAGCQWEVNAEQIKVQS.

ATP is bound at residue 33 to 38 (SGGTDS).

The protein belongs to the tRNA(Ile)-lysidine synthase family.

Its subcellular location is the cytoplasm. The catalysed reaction is cytidine(34) in tRNA(Ile2) + L-lysine + ATP = lysidine(34) in tRNA(Ile2) + AMP + diphosphate + H(+). Functionally, ligates lysine onto the cytidine present at position 34 of the AUA codon-specific tRNA(Ile) that contains the anticodon CAU, in an ATP-dependent manner. Cytidine is converted to lysidine, thus changing the amino acid specificity of the tRNA from methionine to isoleucine. This is tRNA(Ile)-lysidine synthase from Bdellovibrio bacteriovorus (strain ATCC 15356 / DSM 50701 / NCIMB 9529 / HD100).